The chain runs to 420 residues: Tryptophan synthase beta chain (420 aa).

An N6-(pyridoxal phosphate)lysine modification is found at lysine 100.

The protein belongs to the TrpB family. Tetramer of two alpha and two beta chains. Pyridoxal 5'-phosphate serves as cofactor.

The catalysed reaction is (1S,2R)-1-C-(indol-3-yl)glycerol 3-phosphate + L-serine = D-glyceraldehyde 3-phosphate + L-tryptophan + H2O. It participates in amino-acid biosynthesis; L-tryptophan biosynthesis; L-tryptophan from chorismate: step 5/5. The beta subunit is responsible for the synthesis of L-tryptophan from indole and L-serine. This is Tryptophan synthase beta chain from Pyrobaculum islandicum (strain DSM 4184 / JCM 9189 / GEO3).